Consider the following 398-residue polypeptide: Cysteine desulfurase (398 aa).

Residues 74–75, Asn-155, Gln-182, and 202–204 each bind pyridoxal 5'-phosphate; these read GT and CGH. Lys-205 is subject to N6-(pyridoxal phosphate)lysine. Residues 230-244 show a composition bias toward basic and acidic residues; that stretch reads GHQERSRRAGNGERA. Residues 230–253 are disordered; it reads GHQERSRRAGNGERAGHRRAGGGA. Cys-327 (cysteine persulfide intermediate) is an active-site residue. Cys-327 contacts [2Fe-2S] cluster.

It belongs to the class-V pyridoxal-phosphate-dependent aminotransferase family. NifS/IscS subfamily. Homodimer. Pyridoxal 5'-phosphate is required as a cofactor.

It carries out the reaction (sulfur carrier)-H + L-cysteine = (sulfur carrier)-SH + L-alanine. In terms of biological role, catalyzes the removal of elemental sulfur atoms from cysteine to produce alanine. Seems to participate in the biosynthesis of the nitrogenase metalloclusters by providing the inorganic sulfur required for the Fe-S core formation. This is Cysteine desulfurase from Azospirillum brasilense.